The primary structure comprises 28 residues: Ranatuerin-2SEb (28 aa).

Residues C23 and C28 are joined by a disulfide bond.

Expressed by the skin glands.

It localises to the secreted. Functionally, mast cell degranulating peptide. Causes histamine release from rat peritoneal mast cells in vitro. Has antibacterial activity against the Gram-negative bacterium E.coli K12 and Gram-positive bacterium M.luteus NCT C2665. The protein is Ranatuerin-2SEb of Lithobates sevosus (Dusky gopher frog).